We begin with the raw amino-acid sequence, 140 residues long: Small ribosomal subunit protein uS19 (140 aa).

Residues 55 to 74 (LAEARESGTEETANNPIRTH) are disordered.

This sequence belongs to the universal ribosomal protein uS19 family.

In terms of biological role, protein S19 forms a complex with S13 that binds strongly to the 16S ribosomal RNA. The polypeptide is Small ribosomal subunit protein uS19 (Halobacterium salinarum (strain ATCC 29341 / DSM 671 / R1)).